Reading from the N-terminus, the 243-residue chain is Probable ubiquitin-conjugating enzyme E2 33 (243 aa).

The UBC core domain maps to 5-162 (ACIKRLQKEY…FPEYVEKYSQ (158 aa)). Catalysis depends on Cys87, which acts as the Glycyl thioester intermediate. The segment at 168–197 (EEAATQQTTTSENQDFPQKDNAKVESEKSV) is disordered. Over residues 184–197 (PQKDNAKVESEKSV) the composition is skewed to basic and acidic residues. Residues 220-240 (LPGWIVLLLVSIVGVVMALPL) traverse the membrane as a helical segment.

This sequence belongs to the ubiquitin-conjugating enzyme family.

The protein localises to the membrane. It catalyses the reaction S-ubiquitinyl-[E1 ubiquitin-activating enzyme]-L-cysteine + [E2 ubiquitin-conjugating enzyme]-L-cysteine = [E1 ubiquitin-activating enzyme]-L-cysteine + S-ubiquitinyl-[E2 ubiquitin-conjugating enzyme]-L-cysteine.. Its pathway is protein modification; protein ubiquitination. Its function is as follows. Accepts the ubiquitin from the E1 complex and catalyzes its covalent attachment to other proteins. The protein is Probable ubiquitin-conjugating enzyme E2 33 (UBC33) of Arabidopsis thaliana (Mouse-ear cress).